The primary structure comprises 614 residues: 1-deoxy-D-xylulose-5-phosphate synthase (614 aa).

Residues histidine 74 and 115-117 each bind thiamine diphosphate; that span reads AHS. Aspartate 146 is a Mg(2+) binding site. Residues 147–148, asparagine 175, tyrosine 282, and glutamate 363 contribute to the thiamine diphosphate site; that span reads GA. Asparagine 175 is a Mg(2+) binding site.

The protein belongs to the transketolase family. DXPS subfamily. As to quaternary structure, homodimer. Mg(2+) serves as cofactor. Thiamine diphosphate is required as a cofactor.

It catalyses the reaction D-glyceraldehyde 3-phosphate + pyruvate + H(+) = 1-deoxy-D-xylulose 5-phosphate + CO2. Its pathway is metabolic intermediate biosynthesis; 1-deoxy-D-xylulose 5-phosphate biosynthesis; 1-deoxy-D-xylulose 5-phosphate from D-glyceraldehyde 3-phosphate and pyruvate: step 1/1. Its function is as follows. Catalyzes the acyloin condensation reaction between C atoms 2 and 3 of pyruvate and glyceraldehyde 3-phosphate to yield 1-deoxy-D-xylulose-5-phosphate (DXP). This chain is 1-deoxy-D-xylulose-5-phosphate synthase, found in Nitrosomonas eutropha (strain DSM 101675 / C91 / Nm57).